Here is a 154-residue protein sequence, read N- to C-terminus: Neurotrophin-3 (154 aa).

The signal sequence occupies residues 1–18 (MSILFYVMFLAYLRGVQG). Positions 19-134 (NSMDQRSLPE…VNSRSPRRKR (116 aa)) are excised as a propeptide.

It belongs to the NGF-beta family.

It localises to the secreted. Seems to promote the survival of visceral and proprioceptive sensory neurons. This is Neurotrophin-3 (NTF3) from Cervus elaphus (Red deer).